The chain runs to 221 residues: Ribonuclease 3 (221 aa).

The RNase III domain occupies 1-123; that stretch reads MERTGHAFAD…LIAVLYLDGG (123 aa). Glu36 is a binding site for Mg(2+). Asp40 is an active-site residue. Asp109 and Glu112 together coordinate Mg(2+). The active site involves Glu112. The region spanning 148–217 is the DRBM domain; it reads DAKTELQEWA…AAALLLREGV (70 aa).

Belongs to the ribonuclease III family. As to quaternary structure, homodimer. Requires Mg(2+) as cofactor.

Its subcellular location is the cytoplasm. It carries out the reaction Endonucleolytic cleavage to 5'-phosphomonoester.. In terms of biological role, digests double-stranded RNA. Involved in the processing of primary rRNA transcript to yield the immediate precursors to the large and small rRNAs (23S and 16S). Processes some mRNAs, and tRNAs when they are encoded in the rRNA operon. Processes pre-crRNA and tracrRNA of type II CRISPR loci if present in the organism. This chain is Ribonuclease 3, found in Mesorhizobium japonicum (strain LMG 29417 / CECT 9101 / MAFF 303099) (Mesorhizobium loti (strain MAFF 303099)).